We begin with the raw amino-acid sequence, 345 residues long: Galacturonate transporter (345 aa).

The first 32 residues, 1–32 (MFKIKGLRWYMIGLVTIGTVLGYLTRNAIAAA), serve as a signal peptide directing secretion. Helical transmembrane passes span 49–69 (YIIAAYSACYTIMQPVAGYVL), 76–96 (VGYAMFAILWALFCAGTALAN), 100–120 (GLAVARGAVGMAEAAMIPAGL), 139–159 (FNVGSSIGGMLAPPLVVWAIM), 165–185 (MAFLITGALSLVWALCWLYFY), 237–257 (FLAEPAWGTFNAWIPLFMFKA), 265–285 (IAMFAWMPMLFADLGCILGGY), and 304–324 (LVVTLGALLMIGPGTIGLFTS).

This sequence belongs to the major facilitator superfamily. Phthalate permease family.

Its subcellular location is the cell inner membrane. It carries out the reaction aldehydo-D-galacturonate(out) + H(+)(out) = aldehydo-D-galacturonate(in) + H(+)(in). With respect to regulation, inhibited by cyanide and 2,4-dinitrophenol, but not by arsenate. In terms of biological role, transport of D-galacturonate. Cannot transport the dimer digalacturonic acid. Uptake is an active process. The chain is Galacturonate transporter from Dickeya chrysanthemi (Pectobacterium chrysanthemi).